We begin with the raw amino-acid sequence, 139 residues long: D-ribose pyranase (139 aa).

Catalysis depends on H20, which acts as the Proton donor. Substrate contacts are provided by residues D28, H106, and 128-130 (FAN).

This sequence belongs to the RbsD / FucU family. RbsD subfamily. As to quaternary structure, homodecamer.

The protein localises to the cytoplasm. The enzyme catalyses beta-D-ribopyranose = beta-D-ribofuranose. The protein operates within carbohydrate metabolism; D-ribose degradation; D-ribose 5-phosphate from beta-D-ribopyranose: step 1/2. Its function is as follows. Catalyzes the interconversion of beta-pyran and beta-furan forms of D-ribose. This chain is D-ribose pyranase, found in Klebsiella pneumoniae (strain 342).